The primary structure comprises 93 residues: UPF0223 protein gbs1030 (93 aa).

Belongs to the UPF0223 family.

The polypeptide is UPF0223 protein gbs1030 (Streptococcus agalactiae serotype III (strain NEM316)).